A 1035-amino-acid polypeptide reads, in one-letter code: DNA polymerase catalytic subunit (1035 aa).

It belongs to the DNA polymerase type-B family.

The protein localises to the host nucleus. The catalysed reaction is DNA(n) + a 2'-deoxyribonucleoside 5'-triphosphate = DNA(n+1) + diphosphate. The polypeptide is DNA polymerase catalytic subunit (UL54) (Macaca mulatta (Rhesus macaque)).